A 441-amino-acid polypeptide reads, in one-letter code: Mitochondrial distribution and morphology protein 12 (441 aa).

The 441-residue stretch at 1–441 folds into the SMP-LTD domain; it reads MSIDIDWERA…VYPSFWTFLV (441 aa). 2 disordered regions span residues 68–89 and 183–289; these read DFYEDGDEDLSVSSEEQSPMRE and RAVT…RMRE. Composition is skewed to polar residues over residues 226–245 and 253–263; these read SRPSTANTGNTLLSRGSVST and PSQTLLANNPG.

This sequence belongs to the MDM12 family. Component of the ER-mitochondria encounter structure (ERMES) or MDM complex, composed of MMM1, MDM10, MDM12 and MDM34. An MMM1 homodimer associates with one molecule of MDM12 on each side in a pairwise head-to-tail manner, and the SMP-LTD domains of MMM1 and MDM12 generate a continuous hydrophobic tunnel for phospholipid trafficking.

It localises to the mitochondrion outer membrane. The protein resides in the endoplasmic reticulum membrane. In terms of biological role, component of the ERMES/MDM complex, which serves as a molecular tether to connect the endoplasmic reticulum (ER) and mitochondria. Components of this complex are involved in the control of mitochondrial shape and protein biogenesis, and function in nonvesicular lipid trafficking between the ER and mitochondria. MDM12 is required for the interaction of the ER-resident membrane protein MMM1 and the outer mitochondrial membrane-resident beta-barrel protein MDM10. The MDM12-MMM1 subcomplex functions in the major beta-barrel assembly pathway that is responsible for biogenesis of all mitochondrial outer membrane beta-barrel proteins, and acts in a late step after the SAM complex. The MDM10-MDM12-MMM1 subcomplex further acts in the TOM40-specific pathway after the action of the MDM12-MMM1 complex. Essential for establishing and maintaining the structure of mitochondria and maintenance of mtDNA nucleoids. The protein is Mitochondrial distribution and morphology protein 12 of Paracoccidioides lutzii (strain ATCC MYA-826 / Pb01) (Paracoccidioides brasiliensis).